We begin with the raw amino-acid sequence, 319 residues long: Formimidoylglutamase (319 aa).

Mn(2+) is bound by residues Asn-127, Asp-150, His-152, Asp-154, Asp-242, and Asp-244.

The protein belongs to the arginase family. The cofactor is Mn(2+).

The catalysed reaction is N-formimidoyl-L-glutamate + H2O = formamide + L-glutamate. Its pathway is amino-acid degradation; L-histidine degradation into L-glutamate; L-glutamate from N-formimidoyl-L-glutamate (hydrolase route): step 1/1. In terms of biological role, catalyzes the conversion of N-formimidoyl-L-glutamate to L-glutamate and formamide. This is Formimidoylglutamase from Bacillus subtilis (strain 168).